A 42-amino-acid polypeptide reads, in one-letter code: Photosystem I reaction center subunit IX (42 aa).

Residues 7-27 (YLSVAPVLATLWFGSLAGLLI) form a helical membrane-spanning segment.

It belongs to the PsaJ family.

The protein resides in the plastid. The protein localises to the chloroplast thylakoid membrane. May help in the organization of the PsaE and PsaF subunits. The chain is Photosystem I reaction center subunit IX from Chloranthus spicatus (Chulantree).